The following is a 115-amino-acid chain: Sericin-1 (115 aa).

Residues 1 to 115 (GSSGSSGSSG…GGSSSTSSSN (115 aa)) form a disordered region.

Produced exclusively in the middle (MSG) section of silk glands.

The protein resides in the secreted. Functionally, provides the silk fibroin thread with a sticky coating. Acts as a cement by sticking silk threads together. In Galleria mellonella (Greater wax moth), this protein is Sericin-1 (SER1).